Consider the following 157-residue polypeptide: Probable Brix domain-containing ribosomal biogenesis protein (157 aa).

The Brix domain occupies 1 to 157 (MLVTTSRKPS…KFNIKGFKKY (157 aa)).

Functionally, probably involved in the biogenesis of the ribosome. The chain is Probable Brix domain-containing ribosomal biogenesis protein from Methanosarcina mazei (strain ATCC BAA-159 / DSM 3647 / Goe1 / Go1 / JCM 11833 / OCM 88) (Methanosarcina frisia).